A 247-amino-acid chain; its full sequence is MKKILGVIPARYASSRFPGKPLAKIGDKTMIEWTYRNASRSSVLSELVVATDDVRIHEVVQKFGGRSVMTSSDHPSGTDRIIEVANQFSEYSIIVNIQGDEPGIEPELIDGVASLKASHPEWAMSTAAVPLLDFSHAIDFNRVKVIIDRNGKAIYFSRSLIPSQFKTTVPLYRHLGIYGYDRDFLLQYNSLPKSNLEESESLEQLRAIEAGYGIGIYLSKEAGLSVDTPADLEIVIEDFKKRKWISE.

The protein belongs to the KdsB family.

The protein localises to the cytoplasm. It catalyses the reaction 3-deoxy-alpha-D-manno-oct-2-ulosonate + CTP = CMP-3-deoxy-beta-D-manno-octulosonate + diphosphate. Its pathway is nucleotide-sugar biosynthesis; CMP-3-deoxy-D-manno-octulosonate biosynthesis; CMP-3-deoxy-D-manno-octulosonate from 3-deoxy-D-manno-octulosonate and CTP: step 1/1. The protein operates within bacterial outer membrane biogenesis; lipopolysaccharide biosynthesis. Activates KDO (a required 8-carbon sugar) for incorporation into bacterial lipopolysaccharide in Gram-negative bacteria. This Leptospira interrogans serogroup Icterohaemorrhagiae serovar Lai (strain 56601) protein is 3-deoxy-manno-octulosonate cytidylyltransferase.